Consider the following 172-residue polypeptide: GTP-dependent dephospho-CoA kinase (172 aa).

GTP is bound by residues D40, V41, V42, D59, and E112.

It belongs to the GTP-dependent DPCK family.

It catalyses the reaction 3'-dephospho-CoA + GTP = GDP + CoA + H(+). The protein operates within cofactor biosynthesis; coenzyme A biosynthesis. In terms of biological role, catalyzes the GTP-dependent phosphorylation of the 3'-hydroxyl group of dephosphocoenzyme A to form coenzyme A (CoA). The polypeptide is GTP-dependent dephospho-CoA kinase (Methanospirillum hungatei JF-1 (strain ATCC 27890 / DSM 864 / NBRC 100397 / JF-1)).